A 224-amino-acid polypeptide reads, in one-letter code: ATP-dependent dethiobiotin synthetase BioD (224 aa).

Thr18 is a binding site for Mg(2+). The active site involves Lys39. Ser43 lines the substrate pocket. Residues Asp56 and Glu117 each contribute to the Mg(2+) site. Residues Asp56, 117-120 (EGVG), and 177-178 (NE) each bind ATP.

The protein belongs to the dethiobiotin synthetase family. In terms of assembly, homodimer. It depends on Mg(2+) as a cofactor.

The protein localises to the cytoplasm. The enzyme catalyses (7R,8S)-7,8-diammoniononanoate + CO2 + ATP = (4R,5S)-dethiobiotin + ADP + phosphate + 3 H(+). It participates in cofactor biosynthesis; biotin biosynthesis; biotin from 7,8-diaminononanoate: step 1/2. Functionally, catalyzes a mechanistically unusual reaction, the ATP-dependent insertion of CO2 between the N7 and N8 nitrogen atoms of 7,8-diaminopelargonic acid (DAPA, also called 7,8-diammoniononanoate) to form a ureido ring. This Xanthomonas oryzae pv. oryzae (strain MAFF 311018) protein is ATP-dependent dethiobiotin synthetase BioD.